A 355-amino-acid chain; its full sequence is Elongation factor Ts (355 aa).

The segment at 82–85 is involved in Mg(2+) ion dislocation from EF-Tu; sequence TDFV.

This sequence belongs to the EF-Ts family.

Its subcellular location is the cytoplasm. Functionally, associates with the EF-Tu.GDP complex and induces the exchange of GDP to GTP. It remains bound to the aminoacyl-tRNA.EF-Tu.GTP complex up to the GTP hydrolysis stage on the ribosome. This chain is Elongation factor Ts, found in Wolinella succinogenes (strain ATCC 29543 / DSM 1740 / CCUG 13145 / JCM 31913 / LMG 7466 / NCTC 11488 / FDC 602W) (Vibrio succinogenes).